The sequence spans 97 residues: uncharacterized protein (97 aa).

This is an uncharacterized protein from Shigella flexneri.